The following is a 503-amino-acid chain: Lanosterol 14-alpha demethylase (503 aa).

Residues 24 to 44 (GNLLSTLLIACAFTLSLVYLF) form a helical membrane-spanning segment. Cys449 contacts heme.

The protein belongs to the cytochrome P450 family. Heme is required as a cofactor. Post-translationally, ubiquitinated by MARCHF6, leading to proteasomal degradation.

The protein resides in the endoplasmic reticulum membrane. Its subcellular location is the microsome membrane. The catalysed reaction is a 14alpha-methyl steroid + 3 reduced [NADPH--hemoprotein reductase] + 3 O2 = a Delta(14) steroid + formate + 3 oxidized [NADPH--hemoprotein reductase] + 4 H2O + 4 H(+). The enzyme catalyses lanosterol + 3 reduced [NADPH--hemoprotein reductase] + 3 O2 = 4,4-dimethyl-5alpha-cholesta-8,14,24-trien-3beta-ol + formate + 3 oxidized [NADPH--hemoprotein reductase] + 4 H2O + 4 H(+). It carries out the reaction 24,25-dihydrolanosterol + 3 reduced [NADPH--hemoprotein reductase] + 3 O2 = 4,4-dimethyl-8,14-cholestadien-3beta-ol + formate + 3 oxidized [NADPH--hemoprotein reductase] + 4 H2O + 4 H(+). It catalyses the reaction a 14alpha-methyl steroid + reduced [NADPH--hemoprotein reductase] + O2 = a 14alpha-hydroxymethyl steroid + oxidized [NADPH--hemoprotein reductase] + H2O + H(+). The catalysed reaction is a 14alpha-hydroxymethyl steroid + reduced [NADPH--hemoprotein reductase] + O2 = a 14alpha-formyl steroid + oxidized [NADPH--hemoprotein reductase] + 2 H2O + H(+). The enzyme catalyses a 14alpha-formyl steroid + reduced [NADPH--hemoprotein reductase] + O2 = a Delta(14) steroid + formate + oxidized [NADPH--hemoprotein reductase] + H2O + 2 H(+). It carries out the reaction lanosterol + reduced [NADPH--hemoprotein reductase] + O2 = 32-hydroxylanosterol + oxidized [NADPH--hemoprotein reductase] + H2O + H(+). It catalyses the reaction 32-hydroxylanosterol + reduced [NADPH--hemoprotein reductase] + O2 = 32-oxolanosterol + oxidized [NADPH--hemoprotein reductase] + 2 H2O + H(+). The catalysed reaction is 32-oxolanosterol + reduced [NADPH--hemoprotein reductase] + O2 = 4,4-dimethyl-5alpha-cholesta-8,14,24-trien-3beta-ol + formate + oxidized [NADPH--hemoprotein reductase] + H2O + 2 H(+). The enzyme catalyses 24,25-dihydrolanosterol + reduced [NADPH--hemoprotein reductase] + O2 = 32-hydroxy-24,25-dihydrolanosterol + oxidized [NADPH--hemoprotein reductase] + H2O + H(+). It carries out the reaction 32-hydroxy-24,25-dihydrolanosterol + reduced [NADPH--hemoprotein reductase] + O2 = 32-oxo-24,25-dihydrolanosterol + oxidized [NADPH--hemoprotein reductase] + 2 H2O + H(+). It catalyses the reaction 32-oxo-24,25-dihydrolanosterol + reduced [NADPH--hemoprotein reductase] + O2 = 4,4-dimethyl-8,14-cholestadien-3beta-ol + formate + oxidized [NADPH--hemoprotein reductase] + H2O + 2 H(+). The protein operates within steroid biosynthesis; zymosterol biosynthesis; zymosterol from lanosterol: step 1/6. With respect to regulation, inhibited by azalanstat. Inhibited by azole antifungal agents ketoconazole, itraconazole and fluconazole. Sterol 14alpha-demethylase that plays a critical role in the cholesterol biosynthesis pathway, being cholesterol the major sterol component in mammalian membranes as well as a precursor for bile acid and steroid hormone synthesis. Cytochrome P450 monooxygenase that catalyzes the three-step oxidative removal of the 14alpha-methyl group (C-32) of sterols such as lanosterol (lanosta-8,24-dien-3beta-ol) and 24,25-dihydrolanosterol (DHL) in the form of formate, and converts the sterols to 4,4-dimethyl-5alpha-cholesta-8,14,24-trien-3beta-ol and 4,4-dimethyl-8,14-cholestadien-3beta-ol, respectively, which are intermediates of cholesterol biosynthesis. Can also demethylate substrates not intrinsic to mammals, such as eburicol (24-methylene-24,25-dihydrolanosterol), but at a lower rate than DHL. This chain is Lanosterol 14-alpha demethylase, found in Rattus norvegicus (Rat).